Reading from the N-terminus, the 514-residue chain is 2,3-bisphosphoglycerate-independent phosphoglycerate mutase (514 aa).

Positions 14 and 64 each coordinate Mn(2+). Serine 64 acts as the Phosphoserine intermediate in catalysis. Substrate contacts are provided by residues histidine 125, arginine 155–aspartate 156, arginine 187, arginine 193, arginine 263–arginine 266, and lysine 336. Positions 403, 407, 444, 445, and 463 each coordinate Mn(2+).

The protein belongs to the BPG-independent phosphoglycerate mutase family. Monomer. Mn(2+) serves as cofactor.

The catalysed reaction is (2R)-2-phosphoglycerate = (2R)-3-phosphoglycerate. It functions in the pathway carbohydrate degradation; glycolysis; pyruvate from D-glyceraldehyde 3-phosphate: step 3/5. Functionally, catalyzes the interconversion of 2-phosphoglycerate and 3-phosphoglycerate. This chain is 2,3-bisphosphoglycerate-independent phosphoglycerate mutase, found in Shewanella sp. (strain MR-7).